The following is a 502-amino-acid chain: AMP phosphorylase (502 aa).

AMP-binding positions include Gly-168, 195-200, and Thr-204; that span reads SRAITS. Asp-257 functions as the Proton donor in the catalytic mechanism. AMP is bound by residues Ser-265 and Lys-289.

It belongs to the thymidine/pyrimidine-nucleoside phosphorylase family. Type 2 subfamily.

The enzyme catalyses AMP + phosphate = alpha-D-ribose 1,5-bisphosphate + adenine. The catalysed reaction is CMP + phosphate = cytosine + alpha-D-ribose 1,5-bisphosphate. It carries out the reaction UMP + phosphate = alpha-D-ribose 1,5-bisphosphate + uracil. Catalyzes the conversion of AMP and phosphate to adenine and ribose 1,5-bisphosphate (R15P). Exhibits phosphorylase activity toward CMP and UMP in addition to AMP. Functions in an archaeal AMP degradation pathway, together with R15P isomerase and RubisCO. The polypeptide is AMP phosphorylase (Hyperthermus butylicus (strain DSM 5456 / JCM 9403 / PLM1-5)).